The chain runs to 39 residues: Bacteriocin lactococcin-G subunit alpha (39 aa).

Bacteriocin activity requires interaction of alpha and beta peptides in a molar ratio of 7:1 or 8:1 respectively.

Functionally, kills Lactococci. In Lactococcus lactis subsp. lactis (Streptococcus lactis), this protein is Bacteriocin lactococcin-G subunit alpha.